We begin with the raw amino-acid sequence, 603 residues long: Probable methyltransferase-like protein 25 (603 aa).

The interval 326-352 (TSSQQIPNRETSEANKERRKMTSKSSE) is disordered.

In terms of biological role, probable methyltransferase. This chain is Probable methyltransferase-like protein 25 (METTL25), found in Homo sapiens (Human).